The following is a 177-amino-acid chain: Ribosome maturation factor RimM (177 aa).

Positions 96 to 177 (DNEFYWVDLI…KITVDWGLDY (82 aa)) constitute a PRC barrel domain.

It belongs to the RimM family. In terms of assembly, binds ribosomal protein uS19.

It localises to the cytoplasm. An accessory protein needed during the final step in the assembly of 30S ribosomal subunit, possibly for assembly of the head region. Essential for efficient processing of 16S rRNA. May be needed both before and after RbfA during the maturation of 16S rRNA. It has affinity for free ribosomal 30S subunits but not for 70S ribosomes. This Herminiimonas arsenicoxydans protein is Ribosome maturation factor RimM.